We begin with the raw amino-acid sequence, 148 residues long: Putative carbonic anhydrase (148 aa).

In terms of domain architecture, Alpha-carbonic anhydrase spans 1–146 (CLKRLQPGEM…LNGRTVFEVH (146 aa)).

Belongs to the alpha-carbonic anhydrase family. Requires Zn(2+) as cofactor. Component of the acid-insoluble organic matrix of the aragonitic skeleton (at protein level).

It localises to the secreted. The catalysed reaction is hydrogencarbonate + H(+) = CO2 + H2O. Functionally, reversible hydration of carbon dioxide. This is Putative carbonic anhydrase from Acropora millepora (Staghorn coral).